The following is a 278-amino-acid chain: Phosphatidylglycerol--prolipoprotein diacylglyceryl transferase (278 aa).

The next 4 helical transmembrane spans lie at 19–39 (WYGI…INEG), 49–69 (FIDF…IYYV), 83–103 (IIAI…GLIV), and 112–132 (MLPP…AQVI). Arginine 134 provides a ligand contact to a 1,2-diacyl-sn-glycero-3-phospho-(1'-sn-glycerol). 3 helical membrane-spanning segments follow: residues 174-194 (QPTY…ILSL), 204-224 (GEVF…VEGM), and 235-255 (IRVS…LWVY).

The protein belongs to the Lgt family.

The protein localises to the cell membrane. The enzyme catalyses L-cysteinyl-[prolipoprotein] + a 1,2-diacyl-sn-glycero-3-phospho-(1'-sn-glycerol) = an S-1,2-diacyl-sn-glyceryl-L-cysteinyl-[prolipoprotein] + sn-glycerol 1-phosphate + H(+). The protein operates within protein modification; lipoprotein biosynthesis (diacylglyceryl transfer). In terms of biological role, catalyzes the transfer of the diacylglyceryl group from phosphatidylglycerol to the sulfhydryl group of the N-terminal cysteine of a prolipoprotein, the first step in the formation of mature lipoproteins. This chain is Phosphatidylglycerol--prolipoprotein diacylglyceryl transferase, found in Lactobacillus gasseri (strain ATCC 33323 / DSM 20243 / BCRC 14619 / CIP 102991 / JCM 1131 / KCTC 3163 / NCIMB 11718 / NCTC 13722 / AM63).